A 135-amino-acid chain; its full sequence is Small ribosomal subunit protein bS16m (135 aa).

The N-terminal 34 residues, 1-34 (MVQLTTIFCKAYHGGHLTIRLALGGCTNRPFYRI), are a transit peptide targeting the mitochondrion.

This sequence belongs to the bacterial ribosomal protein bS16 family. As to quaternary structure, component of the mitochondrial ribosome small subunit (28S) which comprises a 12S rRNA and about 30 distinct proteins.

The protein resides in the mitochondrion. The polypeptide is Small ribosomal subunit protein bS16m (Mrps16) (Mus musculus (Mouse)).